We begin with the raw amino-acid sequence, 435 residues long: Arginine biosynthesis bifunctional protein ArgJ, mitochondrial (435 aa).

6 residues coordinate substrate: T167, K193, T204, E291, N430, and T435. The active-site Nucleophile is the T204.

This sequence belongs to the ArgJ family. Heterodimer of an alpha and a beta chain. Post-translationally, the alpha and beta chains are autoproteolytically processed from a single precursor protein within the mitochondrion.

It localises to the mitochondrion matrix. It catalyses the reaction N(2)-acetyl-L-ornithine + L-glutamate = N-acetyl-L-glutamate + L-ornithine. The catalysed reaction is L-glutamate + acetyl-CoA = N-acetyl-L-glutamate + CoA + H(+). It participates in amino-acid biosynthesis; L-arginine biosynthesis; L-ornithine and N-acetyl-L-glutamate from L-glutamate and N(2)-acetyl-L-ornithine (cyclic): step 1/1. Its pathway is amino-acid biosynthesis; L-arginine biosynthesis; N(2)-acetyl-L-ornithine from L-glutamate: step 1/4. Functionally, catalyzes two activities which are involved in the cyclic version of arginine biosynthesis: the synthesis of acetylglutamate from glutamate and acetyl-CoA, and of ornithine by transacetylation between acetylornithine and glutamate. In Heterostelium pallidum (strain ATCC 26659 / Pp 5 / PN500) (Cellular slime mold), this protein is Arginine biosynthesis bifunctional protein ArgJ, mitochondrial.